The primary structure comprises 583 residues: SHC-transforming protein 1 (583 aa).

N-acetylmethionine is present on Met-1. Residues Met-1–Glu-92 are disordered. Residues Glu-16–Pro-44 show a composition bias toward low complexity. Phosphoserine is present on residues Ser-36 and Ser-139. Lys-154 carries the post-translational modification N6-acetyllysine. The 184-residue stretch at Met-156 to Glu-339 folds into the PID domain. The segment at Glu-340–Pro-487 is CH1. A phosphotyrosine mark is found at Tyr-349 and Tyr-350. Low complexity predominate over residues Ala-372–Ala-384. Positions Ala-372–Pro-415 are disordered. Tyr-427 carries the post-translational modification Phosphotyrosine. A Phosphoserine modification is found at Ser-453. The 92-residue stretch at Trp-488 to Val-579 folds into the SH2 domain.

As to quaternary structure, interacts with CPNE3; this interaction may mediate the binding of CPNE3 with ERBB2. Interacts with the NPXY motif of tyrosine-phosphorylated IGF1R and INSR in vitro via the PID domain. Once activated, binds to GRB2. Interacts with tyrosine-phosphorylated CD3T and DDR2. Interacts with the N-terminal region of SH2B2. Interacts with phosphorylated LRP1 and IRS4. Interacts with INPP5D/SHIP1 and INPPL1/SHIP2. Interacts with TRIM31. Interacts with PTPN6/SHP (tyrosine phosphorylated). Identified in a complex containing FGFR4, NCAM1, CDH2, PLCG1, FRS2, SRC, SHC1, GAP43 and CTT. Interacts with ALK, GAB2, GRB7 and KIT. Interacts with FLT4 (tyrosine-phosphorylated). Interacts with EPHB1 and GRB2; activates the MAPK/ERK cascade to regulate cell migration. Interacts with PDGFRB (tyrosine-phosphorylated). Interacts with ERBB4. Interacts with TEK/TIE2 (tyrosine-phosphorylated). Interacts with the Trk receptors NTRK1, NTRK2 and NTRK3; in a phosphotyrosine-dependent manner. Interacts with PTK2/FAK1. Interacts with CEACAM1; this interaction is CEACAM1-phosphorylation-dependent and mediates interaction with EGFR or INSR resulting in decrease coupling of SHC1 to the MAPK3/ERK1-MAPK1/ERK2 pathway. Interacts (via PID domain) with PEAK1 (when phosphorylated at 'Tyr-1188'). Found in a complex with PPP1CA, PPP1CC, SHC1 and PEAK1. In terms of assembly, (Microbial infection) Interacts with herpes simplex virus 1 UL46. In terms of processing, phosphorylated by activated epidermal growth factor receptor. Phosphorylated in response to FLT4 and KIT signaling. Isoform p46Shc and isoform p52Shc are phosphorylated on tyrosine residues of the Pro-rich domain. Isoform p66Shc is phosphorylated on Ser-36 by PRKCB upon treatment with insulin, hydrogen peroxide or irradiation with ultraviolet light. Tyrosine phosphorylated in response to FLT3 signaling. Tyrosine phosphorylated by activated PTK2B/PYK2. Tyrosine phosphorylated by ligand-activated ALK. Tyrosine phosphorylated by ligand-activated PDGFRB. Tyrosine phosphorylated by TEK/TIE2. May be tyrosine phosphorylated by activated PTK2/FAK1; tyrosine phosphorylation was seen in an astrocytoma biopsy, where PTK2/FAK1 kinase activity is high, but not in normal brain tissue. Isoform p52Shc dephosphorylation by PTPN2 may regulate interaction with GRB2. As to expression, widely expressed. Expressed in neural stem cells but absent in mature neurons.

It localises to the cytoplasm. The protein localises to the cell junction. It is found in the focal adhesion. Its subcellular location is the mitochondrion matrix. The protein resides in the mitochondrion. Its function is as follows. Signaling adapter that couples activated growth factor receptors to signaling pathways. Participates in a signaling cascade initiated by activated KIT and KITLG/SCF. Isoform p46Shc and isoform p52Shc, once phosphorylated, couple activated receptor tyrosine kinases to Ras via the recruitment of the GRB2/SOS complex and are implicated in the cytoplasmic propagation of mitogenic signals. Isoform p46Shc and isoform p52Shc may thus function as initiators of the Ras signaling cascade in various non-neuronal systems. Isoform p66Shc does not mediate Ras activation, but is involved in signal transduction pathways that regulate the cellular response to oxidative stress and life span. Isoform p66Shc acts as a downstream target of the tumor suppressor p53 and is indispensable for the ability of stress-activated p53 to induce elevation of intracellular oxidants, cytochrome c release and apoptosis. The expression of isoform p66Shc has been correlated with life span. Participates in signaling downstream of the angiopoietin receptor TEK/TIE2, and plays a role in the regulation of endothelial cell migration and sprouting angiogenesis. The sequence is that of SHC-transforming protein 1 (SHC1) from Homo sapiens (Human).